The chain runs to 209 residues: ATP-dependent dethiobiotin synthetase BioD (209 aa).

Residue 13-18 (DVGKTV) coordinates ATP. Position 17 (T17) interacts with Mg(2+). The active site involves K33. A Mg(2+)-binding site is contributed by E100. ATP is bound by residues 100–103 (EGAG) and 184–186 (PRL).

It belongs to the dethiobiotin synthetase family. Homodimer. It depends on Mg(2+) as a cofactor.

The protein localises to the cytoplasm. It catalyses the reaction (7R,8S)-7,8-diammoniononanoate + CO2 + ATP = (4R,5S)-dethiobiotin + ADP + phosphate + 3 H(+). It functions in the pathway cofactor biosynthesis; biotin biosynthesis; biotin from 7,8-diaminononanoate: step 1/2. Catalyzes a mechanistically unusual reaction, the ATP-dependent insertion of CO2 between the N7 and N8 nitrogen atoms of 7,8-diaminopelargonic acid (DAPA, also called 7,8-diammoniononanoate) to form a ureido ring. The polypeptide is ATP-dependent dethiobiotin synthetase BioD (Rhizorhabdus wittichii (strain DSM 6014 / CCUG 31198 / JCM 15750 / NBRC 105917 / EY 4224 / RW1) (Sphingomonas wittichii)).